The sequence spans 284 residues: Nucleotide-binding protein Sputw3181_3461 (284 aa).

Position 8-15 (8-15) interacts with ATP; sequence GRSGSGKS. 56 to 59 provides a ligand contact to GTP; that stretch reads DVRN.

Belongs to the RapZ-like family.

In terms of biological role, displays ATPase and GTPase activities. In Shewanella sp. (strain W3-18-1), this protein is Nucleotide-binding protein Sputw3181_3461.